Here is a 268-residue protein sequence, read N- to C-terminus: Imidazole glycerol phosphate synthase subunit HisF (268 aa).

Catalysis depends on residues Asp-12 and Asp-131.

Belongs to the HisA/HisF family. As to quaternary structure, heterodimer of HisH and HisF.

The protein resides in the cytoplasm. The enzyme catalyses 5-[(5-phospho-1-deoxy-D-ribulos-1-ylimino)methylamino]-1-(5-phospho-beta-D-ribosyl)imidazole-4-carboxamide + L-glutamine = D-erythro-1-(imidazol-4-yl)glycerol 3-phosphate + 5-amino-1-(5-phospho-beta-D-ribosyl)imidazole-4-carboxamide + L-glutamate + H(+). It functions in the pathway amino-acid biosynthesis; L-histidine biosynthesis; L-histidine from 5-phospho-alpha-D-ribose 1-diphosphate: step 5/9. In terms of biological role, IGPS catalyzes the conversion of PRFAR and glutamine to IGP, AICAR and glutamate. The HisF subunit catalyzes the cyclization activity that produces IGP and AICAR from PRFAR using the ammonia provided by the HisH subunit. This Methanoregula boonei (strain DSM 21154 / JCM 14090 / 6A8) protein is Imidazole glycerol phosphate synthase subunit HisF.